Here is a 171-residue protein sequence, read N- to C-terminus: NADH-quinone oxidoreductase subunit B (171 aa).

Residues cysteine 34, cysteine 35, cysteine 99, and cysteine 128 each contribute to the [4Fe-4S] cluster site.

It belongs to the complex I 20 kDa subunit family. In terms of assembly, NDH-1 is composed of 14 different subunits. Subunits NuoB, C, D, E, F, and G constitute the peripheral sector of the complex. The cofactor is [4Fe-4S] cluster.

The protein resides in the cell inner membrane. It catalyses the reaction a quinone + NADH + 5 H(+)(in) = a quinol + NAD(+) + 4 H(+)(out). NDH-1 shuttles electrons from NADH, via FMN and iron-sulfur (Fe-S) centers, to quinones in the respiratory chain. The immediate electron acceptor for the enzyme in this species is believed to be ubiquinone. Couples the redox reaction to proton translocation (for every two electrons transferred, four hydrogen ions are translocated across the cytoplasmic membrane), and thus conserves the redox energy in a proton gradient. In Sulfurihydrogenibium sp. (strain YO3AOP1), this protein is NADH-quinone oxidoreductase subunit B.